We begin with the raw amino-acid sequence, 121 residues long: MRHYEIVLLIHPDQSEQVPAMLERYKGMITAGGGKVHRVEDWGRRQLVYLIQKLAKAHYLCINIEASQAVMEEIEHAFKFNDAVLRHLTVVKKKAETGPSLMMRNVEREEARKAQQQEYAA.

Positions 102 to 121 (MMRNVEREEARKAQQQEYAA) are disordered. Over residues 105 to 115 (NVEREEARKAQ) the composition is skewed to basic and acidic residues.

It belongs to the bacterial ribosomal protein bS6 family.

Binds together with bS18 to 16S ribosomal RNA. The polypeptide is Small ribosomal subunit protein bS6 (Polaromonas sp. (strain JS666 / ATCC BAA-500)).